The primary structure comprises 247 residues: uncharacterized protein (247 aa).

An N-acetyltransferase domain is found at 70–205 (ISLWMGPGNN…QKVPLEIMIR (136 aa)).

The protein belongs to the acetyltransferase family.

The protein localises to the endoplasmic reticulum. Its subcellular location is the golgi apparatus. It localises to the vacuole. This is an uncharacterized protein from Schizosaccharomyces pombe (strain 972 / ATCC 24843) (Fission yeast).